Reading from the N-terminus, the 527-residue chain is GMP synthase [glutamine-hydrolyzing] (527 aa).

A Glutamine amidotransferase type-1 domain is found at 4–202; that stretch reads KILILDFGSQ…VLQICGARAD (199 aa). Cys-81 acts as the Nucleophile in catalysis. Residues His-176 and Glu-178 contribute to the active site. One can recognise a GMPS ATP-PPase domain in the interval 203–395; that stretch reads WEMGNYIDEA…LGLPPAMVYR (193 aa). An ATP-binding site is contributed by 230–236; it reads SGGVDSS.

In terms of assembly, homodimer.

The enzyme catalyses XMP + L-glutamine + ATP + H2O = GMP + L-glutamate + AMP + diphosphate + 2 H(+). It functions in the pathway purine metabolism; GMP biosynthesis; GMP from XMP (L-Gln route): step 1/1. Its function is as follows. Catalyzes the synthesis of GMP from XMP. This Paraburkholderia phytofirmans (strain DSM 17436 / LMG 22146 / PsJN) (Burkholderia phytofirmans) protein is GMP synthase [glutamine-hydrolyzing].